A 269-amino-acid chain; its full sequence is Putative carbamate hydrolase RutD (269 aa).

In terms of domain architecture, AB hydrolase-1 spans 26–144 (VVLLSSGLGG…CFDTRLHLLN (119 aa)).

Belongs to the AB hydrolase superfamily. Hydrolase RutD family.

It catalyses the reaction carbamate + 2 H(+) = NH4(+) + CO2. Functionally, involved in pyrimidine catabolism. May facilitate the hydrolysis of carbamate, a reaction that can also occur spontaneously. The polypeptide is Putative carbamate hydrolase RutD (Caulobacter vibrioides (strain ATCC 19089 / CIP 103742 / CB 15) (Caulobacter crescentus)).